Here is a 91-residue protein sequence, read N- to C-terminus: Small ribosomal subunit protein bS16 (91 aa).

It belongs to the bacterial ribosomal protein bS16 family.

This chain is Small ribosomal subunit protein bS16, found in Staphylococcus haemolyticus (strain JCSC1435).